The sequence spans 206 residues: Small ribosomal subunit protein uS4 (206 aa).

The 61-residue stretch at 96 to 156 folds into the S4 RNA-binding domain; sequence CRLDNVVYRM…EKAKNQLRIA (61 aa).

This sequence belongs to the universal ribosomal protein uS4 family. Part of the 30S ribosomal subunit. Contacts protein S5. The interaction surface between S4 and S5 is involved in control of translational fidelity.

Its function is as follows. One of the primary rRNA binding proteins, it binds directly to 16S rRNA where it nucleates assembly of the body of the 30S subunit. With S5 and S12 plays an important role in translational accuracy. The polypeptide is Small ribosomal subunit protein uS4 (Azotobacter vinelandii (strain DJ / ATCC BAA-1303)).